The following is a 4042-amino-acid chain: Polyketide synthase-nonribosomal peptide synthetase phmA (4042 aa).

Positions 10-411 (NEPIAIVGSA…GANAHAILEA (402 aa)) constitute a Ketosynthase family 3 (KS3) domain. The tract at residues 519–837 (VFTGQGAQWA…TGLLSRDRDD (319 aa)) is acyl transferase. Positions 909 to 1042 (HELLGTKCPD…GRISALFGPP (134 aa)) are N-terminal hotdog fold. The tract at residues 909–1208 (HELLGTKCPD…LHTKPLGHAT (300 aa)) is dehydratase (DH) domain. A PKS/mFAS DH domain is found at 909-1210 (HELLGTKCPD…TKPLGHATPE (302 aa)). His-941 acts as the Proton acceptor; for dehydratase activity in catalysis. Residues 1057-1210 (MIDVDPEQFY…TKPLGHATPE (154 aa)) are C-terminal hotdog fold. The active-site Proton donor; for dehydratase activity is Asp-1117. Residues 1349–1572 (DDMLNDFYVK…VDEHVEFIRN (224 aa)) form a methyltransferase (MT) domain region. The ketoreductase (KR)domain stretch occupies residues 2073 to 2246 (TYWLVGLTGG…AGSVINIGAI (174 aa)). Residues 2351-2433 (ATTADEVNEA…ELVSAAQEQL (83 aa)) form the Carrier 1 domain. O-(pantetheine 4'-phosphoryl)serine is present on Ser-2393. Disordered regions lie at residues 2460-2504 (KTET…SKDA) and 2535-2554 (ATRSKTSSSSSSFTSDPEND). Positions 2479 to 2490 (EVDEEEQEEDEA) are enriched in acidic residues. Positions 2495 to 2504 (NFFSSASKDA) are enriched in polar residues. A compositionally biased stretch (low complexity) spans 2536–2549 (TRSKTSSSSSSFTS). The interval 2584 to 3019 (RVSPMSFGQA…LGRPPLYDPQ (436 aa)) is condensation. An adenylation region spans residues 3047–3443 (EMASRFGSQI…TADGLVLEGR (397 aa)). Residues 3562–3642 (KENKSPESEL…AMLNLISPAS (81 aa)) form the Carrier 2 domain. Residue Ser-3602 is modified to O-(pantetheine 4'-phosphoryl)serine. The reductase-like stretch occupies residues 3703–3924 (ITGASGFLGK…DFVSVESVAH (222 aa)).

The protein belongs to the NRP synthetase family.

It functions in the pathway mycotoxin biosynthesis. Its function is as follows. Hybrid PKS-NRPS synthetase; part of the gene cluster that mediates the biosynthesis of the mycotoxins phomacins, leucine-derived cytochalasans with potent actin polymerization-inhibitory activities and monocot-specific antigerminative activities. The first step in the pathway is catalyzed by the hybrid PKS-NRPS phmA, assisted by the enoyl reductase phmE, that are responsible for fusion of the leucine precursor and the polyketide backbone to produce a 2-pyrrolidone intermediate. The polyketide synthase module (PKS) of phmA is responsible for the synthesis of the polyketide backbone and the downstream nonribosomal peptide synthetase (NRPS) amidates the carboxyl end of the polyketide with the leucine precursor. Because phmA lacks a designated enoylreductase (ER) domain, the required activity is provided the enoyl reductase phmE. Reduction by the hydrolyase phmG, followed by dehydration and intra-molecular Diels-Alder cyclization by the Diels-Alderase phmD then yield the required isoindolone-fused macrocycle. A number of oxidative steps catalyzed by the tailoring cytochrome P450 monooxygenase phmB, the FAD-linked oxidoreductase phmC and the short-chain dehydrogenase/reductase phmF, are further required to afford the final products, phomacin D and phomacin E. This is Polyketide synthase-nonribosomal peptide synthetase phmA from Phaeosphaeria nodorum (strain SN15 / ATCC MYA-4574 / FGSC 10173) (Glume blotch fungus).